We begin with the raw amino-acid sequence, 308 residues long: Cytochrome b (308 aa).

The next 4 membrane-spanning stretches (helical) occupy residues 1 to 21 (FGLLLGICLIVQIVTGLLLAA), 45 to 66 (WLIRNLHANGASFFFICIYLHI), 81 to 101 (WNIGVILLLTLMATAFVGYVX), and 146 to 166 (FFALHFLLPFVFAGLTLVHLT). Residues His-51 and His-65 each coordinate heme b. Residues His-150 and His-164 each coordinate heme b. His-169 contributes to the a ubiquinone binding site. 3 helical membrane-spanning segments follow: residues 194–214 (TKDVLGFVLMLIPLITLALFS), 256–276 (LGGVLALAASVLVLFLIPFLH), and 288–308 (LSQILFWTLVANLLMLTWVSN).

This sequence belongs to the cytochrome b family. As to quaternary structure, the cytochrome bc1 complex contains 11 subunits: 3 respiratory subunits (MT-CYB, CYC1 and UQCRFS1), 2 core proteins (UQCRC1 and UQCRC2) and 6 low-molecular weight proteins (UQCRH/QCR6, UQCRB/QCR7, UQCRQ/QCR8, UQCR10/QCR9, UQCR11/QCR10 and a cleavage product of UQCRFS1). This cytochrome bc1 complex then forms a dimer. The cofactor is heme b.

The protein resides in the mitochondrion inner membrane. Component of the ubiquinol-cytochrome c reductase complex (complex III or cytochrome b-c1 complex) that is part of the mitochondrial respiratory chain. The b-c1 complex mediates electron transfer from ubiquinol to cytochrome c. Contributes to the generation of a proton gradient across the mitochondrial membrane that is then used for ATP synthesis. The chain is Cytochrome b (MT-CYB) from Pomatostomus ruficeps (Chestnut-crowned babbler).